The following is a 1377-amino-acid chain: MKEIKDFEKIRIKIASPDQIRSWSYGEVKKSETINYRTLRPEKDGLFCERIFGTTKEWECYCGKFKSIRYKGIICDRCNVEVTHFKVRRERMGHIELSAPVAHIWYYKYIPSRIGLLLDITASNLNSILYYEKYIVIEPGDTDLKKMQLLNEDEYSEAKERYGMSFSASMGAEAIKTLLENLDLDELSSKLRLQMIDKDDKTDKKLLRRLEIIENFKVSGNKPEWMIMDVLPVIPPEIRPMVQLDGGRFATSDLNDLYRRVINRNNRLRKLLLLNAPEIIVRNEKRMLQESVDSLFDNSHKRKVVKGTSNRPLKSLSDALKGKQGRFRQNLLGKRVDYSGRSVIVVGPELKLHQCGIPAKMALELFKPFVIRKLIESESVFNIKRAKSLIEQEVDEVWQILDNVIKEHPVLLNRAPTLHRLGIQAFEPVLVEGKAIKLHPLVCHAYNADFDGDQMAVHVPLTPAAQAESWALMLSTNNLLNPANGHPIVFPSQDIVLGLYYLTMERKNVVGEGRKFSNFNHVLLAINNKSLDYNARIYVKVDGEYIETTAGCVVFNEALPGKISFVNKTLSDYELQNLISEVYVVYGSSIVIEMLDIIKELGFKYATKFGCTISMSDIIVPEEKKVYVDKANREIAKIQNDYTKGVITGEERYNNVVSVWSKTNEELTNKMMEILKKDRDGFNVIYMMADSGARGSRNQIRQLAGMRGLMAKTSGDIIELPIISNFKEGLSVIEFFISTNGARKGLADTALKTADAGYLTRRLVDIAQDVVVRIEDCGTINGIKVEALKNGEEIVEPLREKAVGSYSIERIKSPITGEIILDVNEEITEDKIKLLETVGIDKLVIRSVLTCEAEHGVCQKCYGRDFSNNKPVNIGEAVGIIAAQSIGQPGTQLTMRTFHIGGVAQAGSEDDKIALKNSFILNGLEGFNVQVDGGLLFTRKGTLRVINVIYEEDIKDIKEFKVLDSQKVIKGMPLFTSKDGIDVLSSHIGYVRIKDNKLMIVSEEQEISLKTGTKLEVNVGDYVEAGRVIGTFDPFAEPIIAEVRGKVKFKDIILGTTLKEEINLETGNIEKRITDQVFESLDPRILIINDRGIEIASYVLPGDAYLQVEDGQDIDIGDIIAKLSKGSEKTQDITGGLPRVNDLFETRIPKNLTEMAKVSGVVQFKAIQKGKRLINVLDEYGVEHKHYIPAGKHLLVRDGDVVKAGDMLCDGRINPHDVLEILGGISLQEFLLAEIQDVYRKQGVSINDKHIGVIIKQMMKKVKIVSVGDTNFVYNQKVDKHTFYEQNKRVIEQGGEPAVASPILIGITKASLNIDSFISAASFQETTKVLTDASIAGSVDDLKGLKENVVIGHLIPTGTGMNLYKRVKVRENSSSEM.

Zn(2+) is bound by residues C60, C62, C75, and C78. Positions 449, 451, and 453 each coordinate Mg(2+). Zn(2+) contacts are provided by C777, C851, C858, and C861.

This sequence belongs to the RNA polymerase beta' chain family. As to quaternary structure, the RNAP catalytic core consists of 2 alpha, 1 beta, 1 beta' and 1 omega subunit. When a sigma factor is associated with the core the holoenzyme is formed, which can initiate transcription. The cofactor is Mg(2+). Zn(2+) serves as cofactor.

It carries out the reaction RNA(n) + a ribonucleoside 5'-triphosphate = RNA(n+1) + diphosphate. In terms of biological role, DNA-dependent RNA polymerase catalyzes the transcription of DNA into RNA using the four ribonucleoside triphosphates as substrates. The protein is DNA-directed RNA polymerase subunit beta' of Borrelia turicatae (strain 91E135).